A 446-amino-acid chain; its full sequence is NADH-ubiquinone oxidoreductase chain 4 (446 aa).

13 helical membrane passes run 4 to 24 (IIFF…YWMV), 56 to 76 (MLSY…LLAS), 93 to 113 (IIIL…FMFY), 114 to 134 (LFFE…GYQP), 139 to 159 (AGLY…IGIF), 182 to 202 (LLYF…LVHL), 218 to 238 (ILAG…ISFL), 245 to 265 (YSFV…LVCL), 272 to 292 (ALIA…LLTM), 297 to 317 (LCGS…LFCL), 330 to 350 (MLIN…WFLL), 373 to 393 (IVSW…FSAA), and 426 to 446 (LLHW…MLWL).

The protein belongs to the complex I subunit 4 family.

The protein localises to the mitochondrion membrane. The enzyme catalyses a ubiquinone + NADH + 5 H(+)(in) = a ubiquinol + NAD(+) + 4 H(+)(out). Functionally, core subunit of the mitochondrial membrane respiratory chain NADH dehydrogenase (Complex I) that is believed to belong to the minimal assembly required for catalysis. Complex I functions in the transfer of electrons from NADH to the respiratory chain. The immediate electron acceptor for the enzyme is believed to be ubiquinone. This chain is NADH-ubiquinone oxidoreductase chain 4 (mt:ND4), found in Drosophila melanogaster (Fruit fly).